Here is a 402-residue protein sequence, read N- to C-terminus: Sulfate adenylyltransferase (402 aa).

It belongs to the sulfate adenylyltransferase family.

The enzyme catalyses sulfate + ATP + H(+) = adenosine 5'-phosphosulfate + diphosphate. It participates in sulfur metabolism; hydrogen sulfide biosynthesis; sulfite from sulfate: step 1/3. This Ruthia magnifica subsp. Calyptogena magnifica protein is Sulfate adenylyltransferase.